Consider the following 279-residue polypeptide: Putative biopolymer transport protein ExbB homolog (279 aa).

The next 3 helical transmembrane spans lie at 19–39 (SGGV…ITAL), 126–146 (IIEV…WYTF), and 162–182 (IYVA…LMPL).

It belongs to the ExbB/TolQ family.

It is found in the cell membrane. This Methanothermobacter thermautotrophicus (strain ATCC 29096 / DSM 1053 / JCM 10044 / NBRC 100330 / Delta H) (Methanobacterium thermoautotrophicum) protein is Putative biopolymer transport protein ExbB homolog.